The primary structure comprises 401 residues: Nicotinate phosphoribosyltransferase (401 aa).

Residue H221 is modified to Phosphohistidine; by autocatalysis.

Belongs to the NAPRTase family. In terms of processing, transiently phosphorylated on a His residue during the reaction cycle. Phosphorylation strongly increases the affinity for substrates and increases the rate of nicotinate D-ribonucleotide production. Dephosphorylation regenerates the low-affinity form of the enzyme, leading to product release.

The enzyme catalyses nicotinate + 5-phospho-alpha-D-ribose 1-diphosphate + ATP + H2O = nicotinate beta-D-ribonucleotide + ADP + phosphate + diphosphate. It participates in cofactor biosynthesis; NAD(+) biosynthesis; nicotinate D-ribonucleotide from nicotinate: step 1/1. Catalyzes the synthesis of beta-nicotinate D-ribonucleotide from nicotinate and 5-phospho-D-ribose 1-phosphate at the expense of ATP. The chain is Nicotinate phosphoribosyltransferase from Yersinia pseudotuberculosis serotype O:1b (strain IP 31758).